Consider the following 1000-residue polypeptide: DENN domain-containing protein 2A (1000 aa).

4 disordered regions span residues methionine 1–glutamine 155, aspartate 174–tyrosine 328, lysine 427–leucine 464, and lysine 491–histidine 525. Residues glutamine 34–proline 43 are compositionally biased toward polar residues. 4 stretches are compositionally biased toward basic and acidic residues: residues isoleucine 56–proline 70, aspartate 79–alanine 117, serine 140–glutamine 155, and histidine 221–glycine 237. Composition is skewed to pro residues over residues proline 249–proline 258 and proline 288–threonine 307. Basic and acidic residues predominate over residues lysine 427–arginine 436. Positions leucine 496–lysine 506 are enriched in polar residues. Serine 544 carries the post-translational modification Phosphoserine. The uDENN domain maps to glutamate 559 to isoleucine 708. In terms of domain architecture, cDENN spans arginine 730 to glutamate 863. A dDENN domain is found at arginine 865–alanine 960.

The protein resides in the cytoplasm. It is found in the cytoskeleton. Its function is as follows. Guanine nucleotide exchange factor (GEF) which may activate RAB9A and RAB9B. Promotes the exchange of GDP to GTP, converting inactive GDP-bound Rab proteins into their active GTP-bound form. May play a role in late endosomes back to trans-Golgi network/TGN transport. This is DENN domain-containing protein 2A (Dennd2a) from Mus musculus (Mouse).